An 86-amino-acid polypeptide reads, in one-letter code: Anti-adapter protein IraP (86 aa).

Positions 1-36 form a coiled coil; that stretch reads MKNLIAELLFKLAQKEEESKELCAQVEALEIIVTAM.

The protein belongs to the IraP family. As to quaternary structure, interacts with RssB.

The protein localises to the cytoplasm. Its function is as follows. Inhibits RpoS proteolysis by regulating RssB activity, thereby increasing the stability of the sigma stress factor RpoS especially during phosphate starvation, but also in stationary phase and during nitrogen starvation. Its effect on RpoS stability is due to its interaction with RssB, which probably blocks the interaction of RssB with RpoS, and the consequent delivery of the RssB-RpoS complex to the ClpXP protein degradation pathway. The protein is Anti-adapter protein IraP of Shigella flexneri serotype 5b (strain 8401).